The primary structure comprises 901 residues: HTH-type transcriptional regulator MalT (901 aa).

ATP is bound at residue 39–46 (SPAGYGKT). One can recognise an HTH luxR-type domain in the interval 829-894 (ELIRTSPLTQ…DAVQHAQQLL (66 aa)). Positions 853–872 (NEQIAGELEVAATTIKTHIR) form a DNA-binding region, H-T-H motif.

It belongs to the MalT family. Monomer in solution. Oligomerizes to an active state in the presence of the positive effectors ATP and maltotriose.

Activated by ATP and maltotriose, which are both required for DNA binding. Positively regulates the transcription of the maltose regulon whose gene products are responsible for uptake and catabolism of malto-oligosaccharides. Specifically binds to the promoter region of its target genes, recognizing a short DNA motif called the MalT box. In Escherichia coli (strain K12 / MC4100 / BW2952), this protein is HTH-type transcriptional regulator MalT.